A 302-amino-acid chain; its full sequence is Segregation and condensation protein A (302 aa).

It belongs to the ScpA family. In terms of assembly, component of a cohesin-like complex composed of ScpA, ScpB and the Smc homodimer, in which ScpA and ScpB bind to the head domain of Smc. The presence of the three proteins is required for the association of the complex with DNA.

It localises to the cytoplasm. Its function is as follows. Participates in chromosomal partition during cell division. May act via the formation of a condensin-like complex containing Smc and ScpB that pull DNA away from mid-cell into both cell halves. This chain is Segregation and condensation protein A, found in Xylella fastidiosa (strain 9a5c).